The chain runs to 549 residues: Undecaprenyl phosphate-alpha-4-amino-4-deoxy-L-arabinose arabinosyl transferase (549 aa).

12 consecutive transmembrane segments (helical) span residues 9–29 (LLLIAFGLFYLVPLSNHGLWI), 80–100 (LFGVRIASVVATALSVLLAYL), 112–132 (SLACALLYASFGLIAGQSGYA), 136–156 (PQFTFWVNLSLVALWHALDAG), 176–196 (FLTKGFLAWLLPVLVALPYML), 204–224 (LLGYGALAVLAALLVCLPWAL), 256–276 (PWWFYLPLLAVACLPWSGLLP), 288–308 (QAPVVFLALWLLLPLAFFSLS), 312–332 (LPTYIMPCLLPLALLMGHALV), 346–366 (NGLLNLGLALLALAALAYLQL), 376–396 (FELFLVLLVIGAWAAAGLAQW), and 402–422 (AWAAPLLASWVLIALLPAAMP).

This sequence belongs to the glycosyltransferase 83 family.

Its subcellular location is the cell inner membrane. It carries out the reaction 4-amino-4-deoxy-alpha-L-arabinopyranosyl di-trans,octa-cis-undecaprenyl phosphate + lipid IVA = lipid IIA + di-trans,octa-cis-undecaprenyl phosphate.. It functions in the pathway lipopolysaccharide metabolism; 4-amino-4-deoxy-beta-L-arabinose-lipid A biosynthesis. In terms of biological role, catalyzes the transfer of the L-Ara4N moiety of the glycolipid undecaprenyl phosphate-alpha-L-Ara4N to lipid A. The modified arabinose is attached to lipid A and is required for resistance to polymyxin and cationic antimicrobial peptides. The protein is Undecaprenyl phosphate-alpha-4-amino-4-deoxy-L-arabinose arabinosyl transferase of Pseudomonas aeruginosa (strain ATCC 15692 / DSM 22644 / CIP 104116 / JCM 14847 / LMG 12228 / 1C / PRS 101 / PAO1).